Reading from the N-terminus, the 853-residue chain is Lysine-specific histone demethylase 1A (853 aa).

The tract at residues 1–177 is disordered; that stretch reads MLSGKKAAAA…EPEEPSGVEG (177 aa). The segment covering 7 to 26 has biased composition (low complexity); the sequence is AAAAAAAAAAAAAAGTEAGS. T60 bears the Phosphothreonine mark. Low complexity predominate over residues 76–97; that stretch reads AEPPGSAGPQAGPTAGPGSATP. T105 is modified (phosphothreonine). Residues 111-152 are a coiled coil; it reads TSRRKRAKVEYREMDESLANLSEDEYYSEEERNAKAEKEKKL. Phosphoserine occurs at positions 127 and 132. Y136 is modified (phosphotyrosine). The residue at position 138 (S138) is a Phosphoserine. Residues 139 to 152 are compositionally biased toward basic and acidic residues; that stretch reads EEERNAKAEKEKKL. Acidic residues predominate over residues 161–173; sequence PEEENESEPEEPS. Position 167 is a phosphoserine (S167). An SWIRM domain is found at 175-274; sequence VEGAAFQSRL…FGIYKRIKPL (100 aa). FAD is bound by residues S290, E309, R311, R317, and 333-334; that span reads MV. Residues 301-853 form a demethylase activity region; sequence FGMDVTLLEA…GVPAQQSPSM (553 aa). A coiled-coil region spans residues 429 to 515; that stretch reads IEHWKKIVKT…EEKLQELEAN (87 aa). K433, K434, and K437 each carry N6-acetyllysine. Residues K443 and K470 each participate in a glycyl lysine isopeptide (Lys-Gly) (interchain with G-Cter in SUMO2) cross-link. K504 participates in a covalent cross-link: Glycyl lysine isopeptide (Lys-Gly) (interchain with G-Cter in ubiquitin). S612 is modified (phosphoserine). Residues E802 and 811-812 contribute to the FAD site; that span reads TV. A Phosphoserine modification is found at S850.

The protein belongs to the flavin monoamine oxidase family. In terms of assembly, component of a histone demethylase complex with RCOR1. Component of a BHC histone deacetylase complex that contains HDAC1, HDAC2, HMG20B, KDM1A, RCOR1 and PHF21A. The BHC complex may also contain ZMYM2, ZNF217, ZMYM3, GSE1 and GTF2I. In the complex, RCOR1 strongly enhances the demethylase activity and protects it from the proteasome while PHF21A inhibits the demethylase activity. Interacts with the androgen receptor (AR). Component of a RCOR/GFI/KDM1A/HDAC complex. Interacts directly with GFI1 and GFI1B. Interacts with SNAI1 (via SNAG domain). Interacts with INSM1. Interacts (via AOD/Tower domain) with JADE2 (via C-terminus). Interacts with ESRRB; co-occupes the core set of ESRRB targets. Interacts with SAMD1 (via WH domain); the interaction modulates KDM1A function. Interacts with RBPJ. Interacts with L3MBTL3. Interacts with ZMYND8. The cofactor is FAD. In terms of processing, acetylated by KAT8 in epithelial but not in mesenchymal cells, thereby regulating the epithelial-to-mesenchymal transition. Acetylation by KAT8 reduces KDM1A association with nucleosomes, thereby decreasing histone H3 demethylation, leading to transcription activatio of target genes. Polyubiquitinated by JADE2; which leads to its proteasomal degradation. Deubiquitinated by USP38; preventing it from degradation by the 26S proteasome. In terms of tissue distribution, ubiquitously expressed.

The protein localises to the nucleus. It is found in the chromosome. The catalysed reaction is N(6),N(6)-dimethyl-L-lysyl(4)-[histone H3] + 2 A + 2 H2O = L-lysyl(4)-[histone H3] + 2 formaldehyde + 2 AH2. The N-terminal sequences of INSM1 and SNAI1 compete with histone H3 for the same binding site and thereby inhibit histone demethylation (in vitro). Functionally, histone demethylase that can demethylate both 'Lys-4' (H3K4me) and 'Lys-9' (H3K9me) of histone H3, thereby acting as a coactivator or a corepressor, depending on the context. Acts by oxidizing the substrate by FAD to generate the corresponding imine that is subsequently hydrolyzed. Acts as a corepressor by mediating demethylation of H3K4me, a specific tag for epigenetic transcriptional activation. Demethylates both mono- (H3K4me1) and di-methylated (H3K4me2) H3K4me. May play a role in the repression of neuronal genes. Alone, it is unable to demethylate H3K4me on nucleosomes and requires the presence of RCOR1/CoREST to achieve such activity. Also acts as a coactivator of androgen receptor (ANDR)-dependent transcription, by being recruited to ANDR target genes and mediating demethylation of H3K9me, a specific tag for epigenetic transcriptional repression. The presence of PRKCB in ANDR-containing complexes, which mediates phosphorylation of 'Thr-6' of histone H3 (H3T6ph), a specific tag that prevents demethylation H3K4me, prevents H3K4me demethylase activity of KDM1A. Demethylates di-methylated 'Lys-370' of p53/TP53 which prevents interaction of p53/TP53 with TP53BP1 and represses p53/TP53-mediated transcriptional activation. Demethylates and stabilizes the DNA methylase DNMT1. Demethylates methylated 'Lys-44' and methylated 'Lys-119' of SOX2. Required for gastrulation during embryogenesis. Component of a RCOR/GFI/KDM1A/HDAC complex that suppresses, via histone deacetylase (HDAC) recruitment, a number of genes implicated in multilineage blood cell development. Facilitates epithelial-to-mesenchymal transition by acting as an effector of SNAI1-mediated transcription repression of epithelial markers E-cadherin/CDH1, CDN7 and KRT8. Required for the maintenance of the silenced state of the SNAI1 target genes E-cadherin/CDH1 and CDN7. Required for the repression of GIPR expression. The sequence is that of Lysine-specific histone demethylase 1A from Mus musculus (Mouse).